Consider the following 205-residue polypeptide: Anaerobic dimethyl sulfoxide reductase chain B (205 aa).

4Fe-4S ferredoxin-type domains follow at residues tyrosine 5 to glutamate 33, phenylalanine 59 to aspartate 89, and glycine 90 to threonine 119. The [4Fe-4S] cluster site is built by cysteine 14, cysteine 17, cysteine 20, cysteine 24, cysteine 67, cysteine 70, cysteine 75, cysteine 79, cysteine 99, cysteine 102, cysteine 105, cysteine 109, cysteine 126, cysteine 129, cysteine 141, and cysteine 145. Residues lysine 184–valine 205 form a disordered region. Positions asparagine 186–threonine 195 are enriched in polar residues.

Heterotrimeric enzyme composed of a catalytic heterodimer (DmsAB) and a membrane anchor protein (DmsC). [4Fe-4S] cluster serves as cofactor.

Its function is as follows. Electron transfer subunit of the terminal reductase during anaerobic growth on various sulfoxide and N-oxide compounds. This chain is Anaerobic dimethyl sulfoxide reductase chain B (dmsB), found in Shigella flexneri.